Consider the following 408-residue polypeptide: Probable serine/threonine-protein kinase PBL16 (408 aa).

A lipid anchor (N-myristoyl glycine) is attached at glycine 2. The S-palmitoyl cysteine moiety is linked to residue cysteine 4. The disordered stretch occupies residues 17 to 50; it reads ANAKSESPKEQSPTVEDKHIKEVQKLPSNPKEVE. Positions 18-30 are enriched in polar residues; sequence NAKSESPKEQSPT. Over residues 31–40 the composition is skewed to basic and acidic residues; the sequence is VEDKHIKEVQ. A Phosphothreonine modification is found at threonine 65. The 285-residue stretch at 76–360 folds into the Protein kinase domain; the sequence is FRQDRVLGGG…DIVDSLEPLQ (285 aa). Residues 82-90 and lysine 113 each bind ATP; that span reads LGGGGFGSV. Tyrosine 159 carries the phosphotyrosine modification. Aspartate 209 acts as the Proton acceptor in catalysis. A phosphoserine mark is found at serine 213 and serine 243. A phosphothreonine mark is found at threonine 244 and threonine 249. Tyrosine 257 carries the post-translational modification Phosphotyrosine.

Belongs to the protein kinase superfamily. Ser/Thr protein kinase family. Palmitoylation at Cys-4 and Cys-6 are required for plasma membrane location.

Its subcellular location is the cell membrane. The catalysed reaction is L-seryl-[protein] + ATP = O-phospho-L-seryl-[protein] + ADP + H(+). It carries out the reaction L-threonyl-[protein] + ATP = O-phospho-L-threonyl-[protein] + ADP + H(+). Its function is as follows. May be involved in plant defense signaling. The chain is Probable serine/threonine-protein kinase PBL16 from Arabidopsis thaliana (Mouse-ear cress).